Reading from the N-terminus, the 388-residue chain is Sex-determination protein fem-3 (388 aa).

6 repeat units span residues 7-10 (SDDV), 110-113 (ITRF), 141-144 (ITRF), 234-237 (YHTT), 284-287 (YHTT), and 371-374 (SDDV).

In terms of assembly, component of a complex containing fem-1, fem-2 and fem-3. Interacts with fem-1 and fem-2 (via N-terminus). Part of a E3 ubiquitin-protein ligase complex, at least composed of cul-2, elc-1, tra-1, fem-1, fem-2 and fem-3; mediates the ubiquitination and subsequent proteasomal degradation of tra-1. Interacts with tra-1. Interacts with sel-10. Interacts with tra-2.

Functionally, required for male development. In XO (male) animals, fem-3 directs male differentiation in all tissues. In XX (hermaphrodite) animals, it specifies the first 80 or so germ cells to be sperm. Negatively regulates male development when bound to tra-2. Together with fem-2 associates with the CBC(fem-1) E3 ubiquitin-protein ligase complex which mediates the ubiquitination and subsequent proteasomal degradation of tra-1. This Caenorhabditis elegans protein is Sex-determination protein fem-3 (fem-3).